A 353-amino-acid polypeptide reads, in one-letter code: S-adenosylmethionine:tRNA ribosyltransferase-isomerase (353 aa).

The protein belongs to the QueA family. Monomer.

It is found in the cytoplasm. The enzyme catalyses 7-aminomethyl-7-carbaguanosine(34) in tRNA + S-adenosyl-L-methionine = epoxyqueuosine(34) in tRNA + adenine + L-methionine + 2 H(+). Its pathway is tRNA modification; tRNA-queuosine biosynthesis. Transfers and isomerizes the ribose moiety from AdoMet to the 7-aminomethyl group of 7-deazaguanine (preQ1-tRNA) to give epoxyqueuosine (oQ-tRNA). The sequence is that of S-adenosylmethionine:tRNA ribosyltransferase-isomerase from Rickettsia bellii (strain RML369-C).